The following is a 212-amino-acid chain: Holliday junction branch migration complex subunit RuvA (212 aa).

Residues 1–66 (MISGLKGTLK…ERGQKLFGFL (66 aa)) are domain I. The interval 67–145 (TEQDKEFFKV…KLELFLSGTS (79 aa)) is domain II. Residues 146-162 (KEPSISLSSFSETPEEA) are flexible linker. Residues 163-212 (ALSRKREIAILGLVQLGFEEKTASKEVDKILKSSSPTDPGEIIREILKSL) form a domain III region.

This sequence belongs to the RuvA family. As to quaternary structure, homotetramer. Forms an RuvA(8)-RuvB(12)-Holliday junction (HJ) complex. HJ DNA is sandwiched between 2 RuvA tetramers; dsDNA enters through RuvA and exits via RuvB. An RuvB hexamer assembles on each DNA strand where it exits the tetramer. Each RuvB hexamer is contacted by two RuvA subunits (via domain III) on 2 adjacent RuvB subunits; this complex drives branch migration. In the full resolvosome a probable DNA-RuvA(4)-RuvB(12)-RuvC(2) complex forms which resolves the HJ.

The protein resides in the cytoplasm. Functionally, the RuvA-RuvB-RuvC complex processes Holliday junction (HJ) DNA during genetic recombination and DNA repair, while the RuvA-RuvB complex plays an important role in the rescue of blocked DNA replication forks via replication fork reversal (RFR). RuvA specifically binds to HJ cruciform DNA, conferring on it an open structure. The RuvB hexamer acts as an ATP-dependent pump, pulling dsDNA into and through the RuvAB complex. HJ branch migration allows RuvC to scan DNA until it finds its consensus sequence, where it cleaves and resolves the cruciform DNA. This is Holliday junction branch migration complex subunit RuvA from Leptospira borgpetersenii serovar Hardjo-bovis (strain JB197).